Here is a 266-residue protein sequence, read N- to C-terminus: Glucosamine-6-phosphate deaminase (266 aa).

D72 (proton acceptor; for enolization step) is an active-site residue. D141 acts as the For ring-opening step in catalysis. H143 acts as the Proton acceptor; for ring-opening step in catalysis. Catalysis depends on E148, which acts as the For ring-opening step.

Belongs to the glucosamine/galactosamine-6-phosphate isomerase family. NagB subfamily. Homohexamer; trimer of disulfide-linked dimers.

The catalysed reaction is alpha-D-glucosamine 6-phosphate + H2O = beta-D-fructose 6-phosphate + NH4(+). It participates in amino-sugar metabolism; N-acetylneuraminate degradation; D-fructose 6-phosphate from N-acetylneuraminate: step 5/5. Its activity is regulated as follows. Allosterically activated by N-acetylglucosamine 6-phosphate (GlcNAc6P). Catalyzes the reversible isomerization-deamination of glucosamine 6-phosphate (GlcN6P) to form fructose 6-phosphate (Fru6P) and ammonium ion. This is Glucosamine-6-phosphate deaminase from Shigella boydii serotype 18 (strain CDC 3083-94 / BS512).